The primary structure comprises 430 residues: Enolase (430 aa).

Glutamine 163 contacts (2R)-2-phosphoglycerate. The Proton donor role is filled by glutamate 205. Mg(2+) is bound by residues aspartate 242, glutamate 286, and aspartate 313. (2R)-2-phosphoglycerate-binding residues include lysine 338, arginine 367, serine 368, and lysine 389. Lysine 338 serves as the catalytic Proton acceptor.

The protein belongs to the enolase family. The cofactor is Mg(2+).

The protein localises to the cytoplasm. It is found in the secreted. Its subcellular location is the cell surface. It catalyses the reaction (2R)-2-phosphoglycerate = phosphoenolpyruvate + H2O. Its pathway is carbohydrate degradation; glycolysis; pyruvate from D-glyceraldehyde 3-phosphate: step 4/5. In terms of biological role, catalyzes the reversible conversion of 2-phosphoglycerate (2-PG) into phosphoenolpyruvate (PEP). It is essential for the degradation of carbohydrates via glycolysis. In Geotalea daltonii (strain DSM 22248 / JCM 15807 / FRC-32) (Geobacter daltonii), this protein is Enolase.